The primary structure comprises 351 residues: F-box protein At1g47810 (351 aa).

The region spanning 8 to 54 (LQSLDPIPVDVLFEIFLNLPAKFLARFVCVSKLWAKIIRNQDFIRSF) is the F-box domain.

The chain is F-box protein At1g47810 from Arabidopsis thaliana (Mouse-ear cress).